Consider the following 61-residue polypeptide: Large ribosomal subunit protein uL30 (61 aa).

It belongs to the universal ribosomal protein uL30 family. As to quaternary structure, part of the 50S ribosomal subunit.

In Clostridioides difficile (strain 630) (Peptoclostridium difficile), this protein is Large ribosomal subunit protein uL30.